The primary structure comprises 751 residues: Palmitoyltransferase ZDHHC8B (751 aa).

Residues 1-13 are Cytoplasmic-facing; that stretch reads MPNSVGKRFKPTK. The helical transmembrane segment at 14–34 threads the bilayer; that stretch reads YIPVSTAATLLVGSTTLFFVF. Residues 35–41 lie on the Extracellular side of the membrane; that stretch reads TCPWLTK. A helical membrane pass occupies residues 42–62; the sequence is AVSPVVPLYNGIVFLFVLANF. Over 63–148 the chain is Cytoplasmic; the sequence is SMATFMDPGV…NCIGRRNYRY (86 aa). The DHHC domain maps to 104-154; that stretch reads KWCATCHFYRPPRCSHCSVCDNCVEEFDHHCPWVNNCIGRRNYRYFFLFLL. Cys-134 serves as the catalytic S-palmitoyl cysteine intermediate. A helical transmembrane segment spans residues 149 to 169; that stretch reads FFLFLLSLSVHMVGVFSFGLL. Topologically, residues 170–185 are extracellular; that stretch reads FVLHHLETLSALHTTV. A helical transmembrane segment spans residues 186–206; sequence TLVVMCVTGLFFIPVMGLTGF. The Cytoplasmic portion of the chain corresponds to 207–751; it reads HMVLVARGRT…VGGTTYEISV (545 aa). 5 disordered regions span residues 293–346, 437–461, 633–659, 666–685, and 703–736; these read RSKS…PSTP, CTPL…SPGT, RSSA…GMNR, RSPV…SPSY, and HLGT…HTSV. The segment covering 326–338 has biased composition (low complexity); sequence SQLTSSEESSLSS. 3 stretches are compositionally biased toward polar residues: residues 633-651, 669-681, and 724-733; these read RSSA…TSLH, VHQS…SVPR, and GTPSGTPSRH.

This sequence belongs to the DHHC palmitoyltransferase family. ERF2/ZDHHC9 subfamily.

The protein localises to the golgi apparatus membrane. Its subcellular location is the mitochondrion membrane. It carries out the reaction L-cysteinyl-[protein] + hexadecanoyl-CoA = S-hexadecanoyl-L-cysteinyl-[protein] + CoA. In terms of biological role, palmitoyltransferase that catalyzes the addition of palmitate onto various protein substrates and therefore function in several unrelated biological processes. The sequence is that of Palmitoyltransferase ZDHHC8B from Danio rerio (Zebrafish).